Reading from the N-terminus, the 380-residue chain is Cytochrome b (380 aa).

The next 4 helical transmembrane spans lie at 34 to 54 (FGSL…LLAM), 78 to 99 (WLIR…YLHI), 114 to 134 (WNTG…GYVL), and 179 to 199 (FFAL…IHLT). Residues His-84 and His-98 each contribute to the heme b site. Heme b is bound by residues His-183 and His-197. Residue His-202 participates in a ubiquinone binding. Transmembrane regions (helical) follow at residues 227 to 247 (LKDI…ALFS), 289 to 309 (LGGV…PFLH), 321 to 341 (ISQL…WVGS), and 348 to 368 (FIII…VLFP).

This sequence belongs to the cytochrome b family. The cytochrome bc1 complex contains 11 subunits: 3 respiratory subunits (MT-CYB, CYC1 and UQCRFS1), 2 core proteins (UQCRC1 and UQCRC2) and 6 low-molecular weight proteins (UQCRH/QCR6, UQCRB/QCR7, UQCRQ/QCR8, UQCR10/QCR9, UQCR11/QCR10 and a cleavage product of UQCRFS1). This cytochrome bc1 complex then forms a dimer. Heme b serves as cofactor.

The protein resides in the mitochondrion inner membrane. Component of the ubiquinol-cytochrome c reductase complex (complex III or cytochrome b-c1 complex) that is part of the mitochondrial respiratory chain. The b-c1 complex mediates electron transfer from ubiquinol to cytochrome c. Contributes to the generation of a proton gradient across the mitochondrial membrane that is then used for ATP synthesis. The chain is Cytochrome b (MT-CYB) from Pelecanoides georgicus (South Georgia diving petrel).